The following is a 161-amino-acid chain: Ferredoxin/F(420)H(2)-dependent CoB-CoM heterodisulfide reductase subunit C (161 aa).

4Fe-4S ferredoxin-type domains lie at K10 to R40 and A51 to I82. [4Fe-4S] cluster is bound by residues C19, C22, C25, C29, C62, C65, C68, and C72.

Belongs to the HdrC family. The ferredoxin/F(420)H(2)-dependent CoB-CoM heterodisulfide reductase is composed of three subunits; HdrA2, HdrB2 and HdrC2. It depends on [4Fe-4S] cluster as a cofactor.

It localises to the cytoplasm. It carries out the reaction coenzyme B + coenzyme M + 2 oxidized [2Fe-2S]-[ferredoxin] = coenzyme M-coenzyme B heterodisulfide + 2 reduced [2Fe-2S]-[ferredoxin] + 2 H(+). It catalyses the reaction coenzyme B + 2 oxidized coenzyme F420-(gamma-L-Glu)(n) + coenzyme M + 2 reduced [2Fe-2S]-[ferredoxin] + 4 H(+) = coenzyme M-coenzyme B heterodisulfide + 2 reduced coenzyme F420-(gamma-L-Glu)(n) + 2 oxidized [2Fe-2S]-[ferredoxin]. It participates in cofactor metabolism; coenzyme M-coenzyme B heterodisulfide reduction; coenzyme B and coenzyme M from coenzyme M-coenzyme B heterodisulfide: step 1/1. Part of a complex that catalyzes the reversible reduction of CoM-S-S-CoB to the thiol-coenzymes H-S-CoM (coenzyme M) and H-S-CoB (coenzyme B). Catalyzes the transfer of electrons from ferredoxin to CoM-S-S-CoB during methanogenesis from acetate. Electrons transfer from ferredoxin to CoM-S-S-CoB via HdrA2, HdrC2 and HdrB2. In addition, the complex can use electron bifurcation to direct electron pairs from reduced coenzyme F420 towards the reduction of both ferredoxin and CoB-CoM heterodisulfide. This activity may take place during Fe(III)-dependent anaerobic methane oxidation. The chain is Ferredoxin/F(420)H(2)-dependent CoB-CoM heterodisulfide reductase subunit C from Methanosarcina acetivorans (strain ATCC 35395 / DSM 2834 / JCM 12185 / C2A).